We begin with the raw amino-acid sequence, 426 residues long: tRNA(Ile)-lysidine synthase (426 aa).

An ATP-binding site is contributed by 19 to 24 (SGGLDS).

The protein belongs to the tRNA(Ile)-lysidine synthase family.

It localises to the cytoplasm. It carries out the reaction cytidine(34) in tRNA(Ile2) + L-lysine + ATP = lysidine(34) in tRNA(Ile2) + AMP + diphosphate + H(+). Functionally, ligates lysine onto the cytidine present at position 34 of the AUA codon-specific tRNA(Ile) that contains the anticodon CAU, in an ATP-dependent manner. Cytidine is converted to lysidine, thus changing the amino acid specificity of the tRNA from methionine to isoleucine. The polypeptide is tRNA(Ile)-lysidine synthase (Neisseria meningitidis serogroup A / serotype 4A (strain DSM 15465 / Z2491)).